The sequence spans 530 residues: GMP synthase [glutamine-hydrolyzing] (530 aa).

The region spanning 4-205 (RILILDYGSQ…VKDICGCEGD (202 aa)) is the Glutamine amidotransferase type-1 domain. The active-site Nucleophile is Cys-84. Residues His-179 and Glu-181 contribute to the active site. Residues 206-398 (WNMPDYISEA…LGLPPQMVYR (193 aa)) enclose the GMPS ATP-PPase domain. 233–239 (SGGVDSL) serves as a coordination point for ATP.

In terms of assembly, homodimer.

The catalysed reaction is XMP + L-glutamine + ATP + H2O = GMP + L-glutamate + AMP + diphosphate + 2 H(+). It participates in purine metabolism; GMP biosynthesis; GMP from XMP (L-Gln route): step 1/1. Catalyzes the synthesis of GMP from XMP. This is GMP synthase [glutamine-hydrolyzing] from Bordetella parapertussis (strain 12822 / ATCC BAA-587 / NCTC 13253).